Here is an 80-residue protein sequence, read N- to C-terminus: Small ribosomal subunit protein bS18c (80 aa).

Positions 1 to 19 (MKKFISRPKRSSRRRKKTP) are enriched in basic residues. Positions 1–24 (MKKFISRPKRSSRRRKKTPIKPGE) are disordered.

The protein belongs to the bacterial ribosomal protein bS18 family. As to quaternary structure, part of the 30S ribosomal subunit.

It localises to the plastid. The protein resides in the chloroplast. This chain is Small ribosomal subunit protein bS18c, found in Staurastrum punctulatum (Green alga).